The chain runs to 156 residues: dCTP deaminase (156 aa).

DCTP is bound by residues 79-84, D95, Q124, and Y138; that span reads RSSLAR.

Belongs to the dCTP deaminase family. In terms of assembly, homotrimer.

It catalyses the reaction dCTP + H2O + H(+) = dUTP + NH4(+). The protein operates within pyrimidine metabolism; dUMP biosynthesis; dUMP from dCTP (dUTP route): step 1/2. Its function is as follows. Catalyzes the deamination of dCTP to dUTP. In Pyrococcus horikoshii (strain ATCC 700860 / DSM 12428 / JCM 9974 / NBRC 100139 / OT-3), this protein is dCTP deaminase.